A 789-amino-acid chain; its full sequence is E3 UFM1-protein ligase 1 (789 aa).

A required for E3 UFM1-protein ligase activity region spans residues 2-212 (AADWEEIRRL…VSNLITRYGF (211 aa)). Disordered regions lie at residues 407-470 (LENS…TGRN) and 743-763 (SKKAEQEDDNKTEEEEGADTI). Over residues 444 to 453 (KIKKTKKKGR) the composition is skewed to basic residues. Acidic residues predominate over residues 748–760 (QEDDNKTEEEEGA).

Belongs to the UFL1 family. As to quaternary structure, catalytic component of the UFM1 ribosome E3 ligase (UREL) complex. Interacts with E2-like enzyme UFC1.

It localises to the endoplasmic reticulum membrane. Its subcellular location is the cytoplasm. It is found in the cytosol. The protein resides in the nucleus. The protein localises to the chromosome. Functionally, E3 protein ligase that mediates ufmylation, the covalent attachment of the ubiquitin-like modifier UFM1 to lysine residues on target proteins, and which plays a key role in various processes, such as ribosome recycling, response to DNA damage, interferon response or reticulophagy (also called ER-phagy). As part of the UREL complex, plays a key role in ribosome recycling by catalyzing mono-ufmylation of RPL26/uL24 subunit of the 60S ribosome. Ufmylation of RPL26/uL24 occurs on free 60S ribosomes following ribosome dissociation: it weakens the junction between post-termination 60S subunits and SEC61 translocons, promoting release and recycling of the large ribosomal subunit from the endoplasmic reticulum membrane. Ufmylation of RPL26/uL24 and subsequent 60S ribosome recycling either take place after normal termination of translation or after ribosome stalling during cotranslational translocation at the endoplasmic reticulum. Involved in reticulophagy in response to endoplasmic reticulum stress by mediating ufmylation of proteins such as CYB5R3 and RPN1, thereby promoting lysosomal degradation of ufmylated proteins. Ufmylation in response to endoplasmic reticulum stress is essential for processes such as hematopoiesis, blood vessel morphogenesis or inflammatory response. The protein is E3 UFM1-protein ligase 1 of Gallus gallus (Chicken).